Reading from the N-terminus, the 371-residue chain is MGKHTAIFDLHRSAGARLVDFAGWDMPLHYGSQVAEHQAVRQGVGIFDVSHMTVIELKGEKVRPFLHQLLANNVDRLTVPGTALYSCMLNTEGGVIDDLIVYLMAEQEFRVVSNAGTRDKVLAWIESHAAPFKVQVEERPELAMIAVQGPEARAQVHGQLPESLKEKVVNLKRFQATWEEGLFVARTGYTGEDGYELLLSGSQAQDWWRRLQAGGAKPCGLGARDTLRLEAGMCLYGADMDETTTPLESGLGWTVAWKPPERDFIGRAVLEAQQAAGCPHQQVGLLLQGKGLMRNGQTITTNLGEGVVTSGGFSPSLERSIALARVPVGADGPCEVQIRGRAVPAAMVKPPFVRNGRACVPAELMEPIEVS.

It belongs to the GcvT family. The glycine cleavage system is composed of four proteins: P, T, L and H.

It catalyses the reaction N(6)-[(R)-S(8)-aminomethyldihydrolipoyl]-L-lysyl-[protein] + (6S)-5,6,7,8-tetrahydrofolate = N(6)-[(R)-dihydrolipoyl]-L-lysyl-[protein] + (6R)-5,10-methylene-5,6,7,8-tetrahydrofolate + NH4(+). Its function is as follows. The glycine cleavage system catalyzes the degradation of glycine. This chain is Aminomethyltransferase, found in Nitrosococcus oceani (strain ATCC 19707 / BCRC 17464 / JCM 30415 / NCIMB 11848 / C-107).